Here is a 134-residue protein sequence, read N- to C-terminus: uncharacterized protein (134 aa).

The HIT domain maps to 4-107 (IFTKIINREL…PTHSLSNFSF (104 aa)). A Histidine triad motif motif is present at residues 91-95 (HLHIH).

This is an uncharacterized protein from Mycobacterium leprae (strain TN).